Here is a 155-residue protein sequence, read N- to C-terminus: Endoribonuclease YbeY (155 aa).

Residues histidine 120, histidine 124, and histidine 130 each contribute to the Zn(2+) site.

This sequence belongs to the endoribonuclease YbeY family. Zn(2+) is required as a cofactor.

It is found in the cytoplasm. In terms of biological role, single strand-specific metallo-endoribonuclease involved in late-stage 70S ribosome quality control and in maturation of the 3' terminus of the 16S rRNA. The polypeptide is Endoribonuclease YbeY (Staphylococcus aureus (strain bovine RF122 / ET3-1)).